The primary structure comprises 623 residues: 1-butanol dehydrogenase (quinone) (623 aa).

The first 28 residues, 1-28 (MKKSHAKPFALRAIVVATAAALSLPAAA), serve as a signal peptide directing secretion. Aspartate 40, threonine 43, and aspartate 46 together coordinate Ca(2+). Glutamate 90 serves as a coordination point for pyrroloquinoline quinone. An intrachain disulfide couples cysteine 134 to cysteine 135. Pyrroloquinoline quinone is bound by residues arginine 140, threonine 184, and 202 to 204 (HGS). Position 208 (glutamate 208) interacts with Ca(2+). The tract at residues 235–274 (HMGRLNGKDSTPTGDPKAPSWPDDPNSPTGKVEAWSQGGG) is disordered. Ca(2+)-binding residues include asparagine 295 and aspartate 345. The active-site Proton acceptor is the aspartate 345. Arginine 374 contributes to the pyrroloquinoline quinone binding site. Residues 420 to 440 (GKPIEKDNRPPQPKEGADKGE) form a disordered region. Position 592 (alanine 592) interacts with pyrroloquinoline quinone.

The protein belongs to the bacterial PQQ dehydrogenase family. Requires pyrroloquinoline quinone as cofactor. Ca(2+) serves as cofactor.

Its subcellular location is the periplasm. It catalyses the reaction butan-1-ol + a quinone = butanal + a quinol. Involved in the metabolism of butane. May function primarily in energy generation. Catalyzes the oxidation of 1-butanol to 1-butanal. Also able to use 2-butanol and butyraldehyde, although the affinity is comparatively low. This Thauera butanivorans (strain ATCC 43655 / DSM 2080 / JCM 20651 / CCUG 51053 / NBRC 103042 / IAM 12574 / Bu B1211) (Pseudomonas butanovora) protein is 1-butanol dehydrogenase (quinone).